The sequence spans 435 residues: 5-hydroxybenzimidazole synthase (435 aa).

Substrate contacts are provided by residues Met95, Tyr124, His163, 186-188 (SKG), 227-230 (NGLR), and Glu266. Residue His270 participates in Zn(2+) binding. Position 293 (Tyr293) interacts with substrate. His334 lines the Zn(2+) pocket. The [4Fe-4S] cluster site is built by Cys410, Cys413, and Cys417.

This sequence belongs to the ThiC family. 5-hydroxybenzimidazole synthase subfamily. Homodimer. [4Fe-4S] cluster serves as cofactor.

The enzyme catalyses 5-amino-1-(5-phospho-beta-D-ribosyl)imidazole + AH2 + S-adenosyl-L-methionine = 5-hydroxybenzimidazole + 5'-deoxyadenosine + formate + L-methionine + A + NH4(+) + phosphate + 2 H(+). Functionally, catalyzes the conversion of aminoimidazole ribotide (AIR) to 5-hydroxybenzimidazole (5-HBI) in a radical S-adenosyl-L-methionine (SAM)-dependent reaction. Is thus involved in the anaerobic biosynthesis of the benzimidazole lower axial ligand of the cobamide produced by G.sulfurreducens. This is 5-hydroxybenzimidazole synthase from Geobacter sulfurreducens (strain ATCC 51573 / DSM 12127 / PCA).